The sequence spans 236 residues: Putative lipoprotein MlpA (236 aa).

A signal peptide spans 1–21 (MTKNIVNTALVLVGAGSLLTG). Residue cysteine 22 is the site of N-palmitoyl cysteine attachment. A lipid anchor (S-diacylglycerol cysteine) is attached at cysteine 22.

The protein resides in the cell membrane. This is Putative lipoprotein MlpA (mlpA) from Myxococcus xanthus.